Consider the following 313-residue polypeptide: Porphobilinogen deaminase (313 aa).

Position 242 is an S-(dipyrrolylmethanemethyl)cysteine (Cys-242).

It belongs to the HMBS family. In terms of assembly, monomer. Dipyrromethane serves as cofactor.

The catalysed reaction is 4 porphobilinogen + H2O = hydroxymethylbilane + 4 NH4(+). It functions in the pathway porphyrin-containing compound metabolism; protoporphyrin-IX biosynthesis; coproporphyrinogen-III from 5-aminolevulinate: step 2/4. Functionally, tetrapolymerization of the monopyrrole PBG into the hydroxymethylbilane pre-uroporphyrinogen in several discrete steps. This is Porphobilinogen deaminase from Pectobacterium carotovorum subsp. carotovorum (strain PC1).